A 492-amino-acid chain; its full sequence is Prenylcysteine oxidase 1-like (492 aa).

The first 21 residues, 1-21 (MAHAARLLAALAALLAAAATG), serve as a signal peptide directing secretion. Residue Asn-340 is glycosylated (N-linked (GlcNAc...) asparagine).

Belongs to the prenylcysteine oxidase family. FAD serves as cofactor.

The protein localises to the secreted. Functionally, likely to have oxidoreductase activity. Required in the mevalonate pathway to regulate prenylation and enhances the bactericidal activity of neutrophils. In Bos taurus (Bovine), this protein is Prenylcysteine oxidase 1-like (PCYOX1L).